Reading from the N-terminus, the 260-residue chain is Coiled-coil domain-containing protein 172 (260 aa).

The stretch at 13-194 forms a coiled coil; it reads SEHQAEESRR…FEDKKHEAIC (182 aa).

It belongs to the CCDC172 family. As to quaternary structure, may interact with TEKT2.

The protein localises to the cytoplasm. The protein resides in the cell projection. It is found in the cilium. In Bos taurus (Bovine), this protein is Coiled-coil domain-containing protein 172 (CCDC172).